The following is a 134-amino-acid chain: T-cell receptor beta chain V region CTL-F3 (134 aa).

The signal sequence occupies residues 1–19 (MAPRLLFCLVLCFLRAEPT). The interval 20-115 (NAGVIQTPRH…SAVYLCASSL (96 aa)) is v segment. Cys42 and Cys111 form a disulfide bridge. An N-linked (GlcNAc...) asparagine glycan is attached at Asn90. A d segment region spans residues 116 to 119 (STGV). Residues 120–134 (SYEQYFGPGTRLTVL) form a j segment region.

This is T-cell receptor beta chain V region CTL-F3 from Mus musculus (Mouse).